A 602-amino-acid chain; its full sequence is Zinc finger protein 652-B (602 aa).

A disordered region spans residues phenylalanine 60 to lysine 232. The segment covering proline 65 to serine 79 has biased composition (basic and acidic residues). 2 stretches are compositionally biased toward acidic residues: residues glycine 80–glutamate 108 and aspartate 148–asparagine 167. Basic and acidic residues predominate over residues serine 222–lysine 232. The segment at leucine 235–histidine 258 adopts a C2H2-type 1 zinc-finger fold. Residues glutamine 262 to aspartate 284 form a C2H2-type 2; degenerate zinc finger. C2H2-type zinc fingers lie at residues isoleucine 289–histidine 312, phenylalanine 319–histidine 341, phenylalanine 347–histidine 369, phenylalanine 375–histidine 397, phenylalanine 403–histidine 425, and phenylalanine 431–histidine 453. A C2H2-type 9; degenerate zinc finger spans residues tyrosine 459–phenylalanine 482. Residues proline 543 to serine 575 are disordered. A compositionally biased stretch (basic residues) spans serine 545 to histidine 557. Positions proline 561–alanine 571 are enriched in pro residues.

This sequence belongs to the krueppel C2H2-type zinc-finger protein family.

It is found in the nucleus. Functionally, may be involved in transcriptional regulation. The sequence is that of Zinc finger protein 652-B (znf652-b) from Xenopus laevis (African clawed frog).